A 170-amino-acid polypeptide reads, in one-letter code: Small ribosomal subunit protein uS5 (170 aa).

The region spanning 12-75 (LSELLVSVRR…NAAKKSMIRV (64 aa)) is the S5 DRBM domain.

The protein belongs to the universal ribosomal protein uS5 family. As to quaternary structure, part of the 30S ribosomal subunit. Contacts proteins S4 and S8.

With S4 and S12 plays an important role in translational accuracy. Functionally, located at the back of the 30S subunit body where it stabilizes the conformation of the head with respect to the body. This Wolbachia pipientis wMel protein is Small ribosomal subunit protein uS5.